A 608-amino-acid polypeptide reads, in one-letter code: Threonine--tRNA ligase (608 aa).

The segment at 1–144 (MRILLIHSDY…SRTITAEEEE (144 aa)) is editing domain. The catalytic stretch occupies residues 195-489 (PHVKLMREKE…ELDEKAPMLP (295 aa)). Residues Cys-286, His-338, and His-459 each contribute to the Zn(2+) site.

Belongs to the class-II aminoacyl-tRNA synthetase family. In terms of assembly, homodimer. Requires Zn(2+) as cofactor.

The protein localises to the cytoplasm. The catalysed reaction is tRNA(Thr) + L-threonine + ATP = L-threonyl-tRNA(Thr) + AMP + diphosphate + H(+). Functionally, catalyzes the attachment of threonine to tRNA(Thr) in a two-step reaction: L-threonine is first activated by ATP to form Thr-AMP and then transferred to the acceptor end of tRNA(Thr). Also edits incorrectly charged L-seryl-tRNA(Thr). This chain is Threonine--tRNA ligase, found in Methanobrevibacter smithii (strain ATCC 35061 / DSM 861 / OCM 144 / PS).